The primary structure comprises 425 residues: Histidine--tRNA ligase (425 aa).

Belongs to the class-II aminoacyl-tRNA synthetase family. Homodimer.

It localises to the cytoplasm. It catalyses the reaction tRNA(His) + L-histidine + ATP = L-histidyl-tRNA(His) + AMP + diphosphate + H(+). This chain is Histidine--tRNA ligase, found in Listeria monocytogenes serotype 4b (strain F2365).